Here is a 108-residue protein sequence, read N- to C-terminus: UPF0060 membrane protein Rsph17029_0436 (108 aa).

4 helical membrane passes run 5–25 (LAAYAGAALAEIAGCFAVWAW), 32–52 (ALWLVPGALSLGAFAWLLALT), 62–82 (AVYGGVYVAASLLWLWAVEGV), and 86–106 (RWDMGGAALVLAGAAVILWAP).

It belongs to the UPF0060 family.

It localises to the cell inner membrane. This is UPF0060 membrane protein Rsph17029_0436 from Cereibacter sphaeroides (strain ATCC 17029 / ATH 2.4.9) (Rhodobacter sphaeroides).